Here is a 211-residue protein sequence, read N- to C-terminus: Urease accessory protein UreG (211 aa).

16–23 serves as a coordination point for GTP; the sequence is GPVGSGKT.

Belongs to the SIMIBI class G3E GTPase family. UreG subfamily. Homodimer. UreD, UreF and UreG form a complex that acts as a GTP-hydrolysis-dependent molecular chaperone, activating the urease apoprotein by helping to assemble the nickel containing metallocenter of UreC. The UreE protein probably delivers the nickel.

Its subcellular location is the cytoplasm. Its function is as follows. Facilitates the functional incorporation of the urease nickel metallocenter. This process requires GTP hydrolysis, probably effectuated by UreG. This chain is Urease accessory protein UreG, found in Janthinobacterium sp. (strain Marseille) (Minibacterium massiliensis).